Consider the following 1402-residue polypeptide: Transcription factor SPT20 homolog (1402 aa).

7 disordered regions span residues 1–29 (MNGNSKVHTEENKNEHQQEGKGGEQEQEQ), 60–107 (VNSL…LDTD), 114–133 (NNDSSNNTTTTTIPRQSSSS), 177–206 (QTTLPTNNNNNNNNNNNNNNNNNNNNNNIL), 786–817 (APSTSTSSSSSSGGTTTTTTATGTTPTTPTPV), 1136–1174 (PQQIQTQPLQQPPNQMAQSMISPQSTPSTSPSPQQQYQT), and 1199–1250 (QPLQ…PPQI). A compositionally biased stretch (basic and acidic residues) spans 7–29 (VHTEENKNEHQQEGKGGEQEQEQ). The span at 60 to 72 (VNSLSEPTPNEQQ) shows a compositional bias: polar residues. Low complexity predominate over residues 73–102 (NNNNNNNSNGNGNGNDETTSSKTTTIINSN). 6 stretches are compositionally biased toward low complexity: residues 183-204 (NNNNNNNNNNNNNNNNNNNNNN), 786-812 (APSTSTSSSSSSGGTTTTTTATGTTPT), 1136-1150 (PQQIQTQPLQQPPNQ), 1157-1174 (SPQSTPSTSPSPQQQYQT), 1199-1218 (QPLQQPQPQPQQQQQQQQQQ), and 1226-1250 (PQQFAQHLQQQQMQRPQAQLQPPQI).

The protein belongs to the SPT20 family.

This Dictyostelium discoideum (Social amoeba) protein is Transcription factor SPT20 homolog.